Here is a 241-residue protein sequence, read N- to C-terminus: ATP synthase subunit a (241 aa).

5 helical membrane-spanning segments follow: residues 30-50 (GQVF…VLVG), 89-109 (LPFI…GALI), 128-148 (INTT…AGLS), 193-213 (LAVG…VMLL), and 214-234 (GLFT…FYIG).

It belongs to the ATPase A chain family. In terms of assembly, F-type ATPases have 2 components, CF(1) - the catalytic core - and CF(0) - the membrane proton channel. CF(1) has five subunits: alpha(3), beta(3), gamma(1), delta(1), epsilon(1). CF(0) has four main subunits: a, b, b' and c.

It localises to the cellular thylakoid membrane. Key component of the proton channel; it plays a direct role in the translocation of protons across the membrane. This is ATP synthase subunit a from Synechococcus sp. (strain CC9605).